A 131-amino-acid chain; its full sequence is Profilin (131 aa).

Belongs to the profilin family. Occurs in many kinds of cells as a complex with monomeric actin in a 1:1 ratio.

It localises to the cytoplasm. The protein resides in the cytoskeleton. Functionally, binds to actin and affects the structure of the cytoskeleton. At high concentrations, profilin prevents the polymerization of actin, whereas it enhances it at low concentrations. By binding to PIP2, it inhibits the formation of IP3 and DG. The sequence is that of Profilin from Chenopodium album (Fat hen).